The following is a 195-amino-acid chain: Holliday junction branch migration complex subunit RuvA (195 aa).

A domain I region spans residues 1–63 (MIASVRGEVL…EDSQTLYGFA (63 aa)). Residues 64-138 (DSDARDLFLT…DKVGSSTSSG (75 aa)) form a domain II region. The segment at 138 to 142 (GVAAA) is flexible linker. The segment at 143 to 195 (GGHGIRGPVVEALVGLGFAVKQAEEATDKVLANDPEATTSSALRAALSMLGKK) is domain III.

Belongs to the RuvA family. Homotetramer. Forms an RuvA(8)-RuvB(12)-Holliday junction (HJ) complex. HJ DNA is sandwiched between 2 RuvA tetramers; dsDNA enters through RuvA and exits via RuvB. An RuvB hexamer assembles on each DNA strand where it exits the tetramer. Each RuvB hexamer is contacted by two RuvA subunits (via domain III) on 2 adjacent RuvB subunits; this complex drives branch migration. In the full resolvosome a probable DNA-RuvA(4)-RuvB(12)-RuvC(2) complex forms which resolves the HJ.

It localises to the cytoplasm. Functionally, the RuvA-RuvB-RuvC complex processes Holliday junction (HJ) DNA during genetic recombination and DNA repair, while the RuvA-RuvB complex plays an important role in the rescue of blocked DNA replication forks via replication fork reversal (RFR). RuvA specifically binds to HJ cruciform DNA, conferring on it an open structure. The RuvB hexamer acts as an ATP-dependent pump, pulling dsDNA into and through the RuvAB complex. HJ branch migration allows RuvC to scan DNA until it finds its consensus sequence, where it cleaves and resolves the cruciform DNA. The polypeptide is Holliday junction branch migration complex subunit RuvA (Mycolicibacterium gilvum (strain PYR-GCK) (Mycobacterium gilvum (strain PYR-GCK))).